We begin with the raw amino-acid sequence, 118 residues long: Large ribosomal subunit protein uL22 (118 aa).

Belongs to the universal ribosomal protein uL22 family. Part of the 50S ribosomal subunit.

This protein binds specifically to 23S rRNA; its binding is stimulated by other ribosomal proteins, e.g. L4, L17, and L20. It is important during the early stages of 50S assembly. It makes multiple contacts with different domains of the 23S rRNA in the assembled 50S subunit and ribosome. In terms of biological role, the globular domain of the protein is located near the polypeptide exit tunnel on the outside of the subunit, while an extended beta-hairpin is found that lines the wall of the exit tunnel in the center of the 70S ribosome. The sequence is that of Large ribosomal subunit protein uL22 from Thermomicrobium roseum (strain ATCC 27502 / DSM 5159 / P-2).